Consider the following 434-residue polypeptide: MKFPGKRKSKHYFPVNARDPLLQQFQPENETSAAWVVGIDQTLVDIEAKVDDEFIERYGLSAGHSLVIEDDVAEALYQELKQKNLITHQFAGGTIGNTMHNYSVLADDRSVLLGVMCSNIEIGSYAYRYLCNTSSRTDLNYLQGVDGPIGRCFTLIGESGERTFAISPGHMNQLRAESIPEDVIAGASALVLTSYLVRCKPGEPMPEATMKAIEYAKKYNVPVVLTLGTKFVIAENPQWWQQFLKDHVSILAMNEDEAEALTGESDPLLASDKALDWVDLVLCTAGPIGLYMAGFTEDEAKRKTQHPLLPGAIAEFNQYEFSRAMRHKDCQNPLRVYSHIAPYMGGPEKIMNTNGAGDGALAALLHDITANSYHRSNVPNSSKHKFTWLTYSSLAQVCKYANRVSYQVLNQHSPRLTRGLPEREDSLEESYWDR.

GMP is bound by residues 40–45 (DQTLVD), 93–97 (GTIGN), and Arg-198. ATP contacts are provided by residues 284 to 289 (TAGPIG), Gly-357, and Asn-402.

The protein belongs to the carbohydrate kinase PfkB family. Requires Mg(2+) as cofactor.

The catalysed reaction is guanosine + ATP = GMP + ADP + H(+). It carries out the reaction inosine + ATP = IMP + ADP + H(+). It participates in purine metabolism; IMP biosynthesis via salvage pathway; IMP from inosine: step 1/1. It functions in the pathway purine metabolism; GMP biosynthesis via salvage pathway. Catalyzes the phosphorylation of guanosine and inosine to GMP and IMP, respectively. This is Guanosine-inosine kinase from Escherichia coli O157:H7.